The chain runs to 659 residues: MRIGVDYYPEHWDRQLWEKDAQLMKEIGVKVVRLAEFAWCKLEPIEGQYDFKWLDDVIEIFSVRNIEIVLGTPTNTPPLWLYEKYPDAIQVNESGERQFIGIRGHRCYNSSSMRKYTKAIVEAMTERYANNKAVIGWQIDNELDATHCCCDNCTEKFRGWLKNKYSTLENINKEYGNVVWSGEYSAWSQVTAPLGGSPFLNPSYLLDYNRFASDSMVEYIDFQREIIRKNCPSQFITTNTWFTGNLPNFYDAFENLDFVSYDNYPTTNEITDEEELHSHAFHCDLMRGIKKKNFWIMEQLSGTPGCWMPMQRTPKPGMIKGYSFQAIGRGAETVVHFRWRNAIIGAEMFWHGILDHSNVKGRRFYEFAELCREVNKINEEIPDYKINNEVAILYSSDQDFAFKIQPQVEGLYYLQQLKAFHNALIRLGVGTDIINWSESLNKYKVVIAPTLYLTDDNVTTELYRFVEAGGTLILTNRTGVKNMNNVCLMEQMPSNLKECAGVVVKEYDPIGHSIHTIKDEAGKVYQCKQWCDILEPTTAKVIATYNDDFYIDEAAVTVNKYKKGNVYYLGTVFNSDYYIELLSKILDEKELPYYKKLPYGLELSVLENENGKYLMVFNNSNEIKCFEGKHEGKSIIRNELDGKSFTLEPYGIEVLQLVE.

Residue Arg-103 coordinates substrate. Cys-107 contacts Zn(2+). Position 141 (Asn-141) interacts with substrate. The Proton donor role is filled by Glu-142. Residues Cys-148, Cys-150, and Cys-153 each coordinate Zn(2+). Glu-298 acts as the Nucleophile in catalysis. Trp-307 contacts substrate.

The protein belongs to the glycosyl hydrolase 42 family. Dimer.

The enzyme catalyses Hydrolysis of terminal non-reducing beta-D-galactose residues in beta-D-galactosides.. With respect to regulation, inhibited by Cu(2+), Hg(2+) and Zn(2+). No effect with Ca(2+), Mg(2+), Mn(2+) or excess EDTA (10 mM). Involved in plant cell wall degradation in cooperation with cellulosome. Hydrolyzes both p-nitrophenyl-alpha-L-arabinopyranoside (pNPAp) and p-nitrophenyl-beta-D-galactopyranoside (pNPGp), with higher activity for pNPAp. Shows hydrolysis activity against p-nitrophenyl-beta-D-fucopyranoside (pNPFp), but not against p-nitrophenyl-alpha-L-arabinofuranoside (pNPAf), o-nitrophenyl-beta-D-galactopyranoside (oNPGp), p-nitrophenyl-beta-D-xylopyranoside (pNPXp), p-nitrophenyl-beta-D-glucopyranoside (pNPGLp), p-nitrophenyl-beta-D-cellobiopyranoside (pNPCp), p-nitrophenyl-beta-lactopyranoside (pNPLp) or p-nitrophenyl-alpha-galactopyranoside (pNPalphaGp). No detectable activity against arabinan or arabinoxylan, but activity against arabinogalactan can be detected. Increases degradation activity of alpha-L-arabinofuranosidase (ArfA) and endo-1,4-beta-xylanase (XynA) when corn fiber gum and corn stem powder are used as substrates. This is Beta-galactosidase BgaA (bgaA) from Clostridium cellulovorans (strain ATCC 35296 / DSM 3052 / OCM 3 / 743B).